The following is a 217-amino-acid chain: Salivary glue protein Sgs-3 (217 aa).

Residues 1–23 (MKLTIATVLASILLIGFANVANC) form the signal peptide. Residues 45–130 (KSTSTTTTTT…KPTTHSTPKT (86 aa)) show a composition bias toward low complexity. Residues 45 to 163 (KSTSTTTTTT…KHTTPTTTTT (119 aa)) are disordered. Residues 131–154 (KPTKHTTPKTKPTKHTTPKTKPTK) show a composition bias toward basic residues.

The polypeptide is Salivary glue protein Sgs-3 (Sgs3) (Drosophila simulans (Fruit fly)).